The primary structure comprises 687 residues: UvrABC system protein B (687 aa).

The region spanning 26–414 (EGLAAGEMYQ…GAVIEQVVRP (389 aa)) is the Helicase ATP-binding domain. Position 39 to 46 (39 to 46 (GVTGSGKT)) interacts with ATP. Residues 92 to 115 (YYDYYQPEAYVPASDTYIGKDASV) carry the Beta-hairpin motif. Residues 430 to 596 (QVDDLLSEIR…GIQKAVREII (167 aa)) form the Helicase C-terminal domain. The region spanning 630 to 665 (AKRLQQLERQMHKHAQNLEFEQAARLRDEIKRIKGW) is the UVR domain.

Belongs to the UvrB family. As to quaternary structure, forms a heterotetramer with UvrA during the search for lesions. Interacts with UvrC in an incision complex.

The protein localises to the cytoplasm. Its function is as follows. The UvrABC repair system catalyzes the recognition and processing of DNA lesions. A damage recognition complex composed of 2 UvrA and 2 UvrB subunits scans DNA for abnormalities. Upon binding of the UvrA(2)B(2) complex to a putative damaged site, the DNA wraps around one UvrB monomer. DNA wrap is dependent on ATP binding by UvrB and probably causes local melting of the DNA helix, facilitating insertion of UvrB beta-hairpin between the DNA strands. Then UvrB probes one DNA strand for the presence of a lesion. If a lesion is found the UvrA subunits dissociate and the UvrB-DNA preincision complex is formed. This complex is subsequently bound by UvrC and the second UvrB is released. If no lesion is found, the DNA wraps around the other UvrB subunit that will check the other stand for damage. The protein is UvrABC system protein B of Nitrosococcus oceani (strain ATCC 19707 / BCRC 17464 / JCM 30415 / NCIMB 11848 / C-107).